The chain runs to 101 residues: Small ribosomal subunit protein uS14 (101 aa).

The tract at residues 51-70 is disordered; the sequence is LPRDSSPSRQRNRCSQTGRP. Residues 52–68 are compositionally biased toward polar residues; that stretch reads PRDSSPSRQRNRCSQTG.

The protein belongs to the universal ribosomal protein uS14 family. As to quaternary structure, part of the 30S ribosomal subunit. Contacts proteins S3 and S10.

Binds 16S rRNA, required for the assembly of 30S particles and may also be responsible for determining the conformation of the 16S rRNA at the A site. In Mannheimia succiniciproducens (strain KCTC 0769BP / MBEL55E), this protein is Small ribosomal subunit protein uS14.